We begin with the raw amino-acid sequence, 255 residues long: 1-(5-phosphoribosyl)-5-[(5-phosphoribosylamino)methylideneamino] imidazole-4-carboxamide isomerase (255 aa).

Residue Asp8 is the Proton acceptor of the active site. Asp129 acts as the Proton donor in catalysis.

The protein belongs to the HisA/HisF family.

The protein localises to the cytoplasm. It carries out the reaction 1-(5-phospho-beta-D-ribosyl)-5-[(5-phospho-beta-D-ribosylamino)methylideneamino]imidazole-4-carboxamide = 5-[(5-phospho-1-deoxy-D-ribulos-1-ylimino)methylamino]-1-(5-phospho-beta-D-ribosyl)imidazole-4-carboxamide. It functions in the pathway amino-acid biosynthesis; L-histidine biosynthesis; L-histidine from 5-phospho-alpha-D-ribose 1-diphosphate: step 4/9. This Synechococcus sp. (strain CC9605) protein is 1-(5-phosphoribosyl)-5-[(5-phosphoribosylamino)methylideneamino] imidazole-4-carboxamide isomerase.